The chain runs to 1074 residues: MKFEKNTDIFILPDFIRIQLESFHRFIEKGLLEEFQRFPVIRDSSGELSYFLNGKRYKLQEPSFNEQEAIYQASTYSSELYVPAQITHTKSEKTKSEIILIGNIPIMTARGNFIINGASRVIVNQILRSPGLYYGSELDAQANITYSCTFISEWGGRLKLEMDNKRRIWVRLSKKRKIPVLLLLLAMGLNWKDLEKLISRPSLLLSYLSKEKRTPYSPEEAIIELYRHSCSVSGEISFSENIRKELYHKFFKIRCEIGSIGRLNINKKLNLDIPEEERFLVPQDLIAAINSLIEKSFKIVNLDDIDHLKNRRVHLIADMLQSQVRIALNRLKRMIAEVMRGINKRKNLPNPQSLVTPKPLVATFQEFFGSHPLCQFMDQTNPLAEITHKRRISSLGPGGLTQKTATFNVRDIHPSHYGKICPIETPEGQNAGLVSSLAILANINQNGFIESPFLKLHKNEYKQLTGSEHLCSEQEEYYRITTGEHSRETAEKKGKPTPIRYRQEFSATAFHFLHFRDILPIQYFSIATSLIPFLEHDDANRALMGSNMQRQAVPLLRPEKPIVGTGLEGQVALDSAALVLSKIEGKVDFVDGRNINIRSNIVINEFFSFQLINYERSNQNTCLHQKPIVKKDDYVKKGELLADASSTLGGEISLGNNILVAYMPWEGYNFEDAVLINERLIYEDIYTSIHIEKYEIEVNMTSLGPEKITKKIPHLSEYLLRNLDVNGLILLGSWVKTGDVLVGKLTPREPGESLRLPEGRLLHAIFGIKASSFFETCLKVAPGAEGRVIDVRWVESANKLTQKYIKTVNIYILQKRKIQVGDKIAGRHGNKGVISRILPREDMPYIQDGTPIDMVLSPLGVPSRMNLGQIFECLLGLAGESLKKHYRIMPFDERHEREASRKLAFSELYQAKKFTGHSWLFEPDTPGKSQLFDGRTGQTFENAITVGKAYILKLIHQVDDKIHARSTGPYSMVTQQPLGGKARRGGQRMGEMEVWALEGFGAAYTLQELLTRKSDDMKGRNEALGAIVTGNLIPKPNTTPESFKLLMRELRCLCLNIHHCSLFQENLSMKNIEF.

Belongs to the RNA polymerase beta chain family. As to quaternary structure, in plastids the minimal PEP RNA polymerase catalytic core is composed of four subunits: alpha, beta, beta', and beta''. When a (nuclear-encoded) sigma factor is associated with the core the holoenzyme is formed, which can initiate transcription.

It is found in the plastid. The protein localises to the chloroplast. The enzyme catalyses RNA(n) + a ribonucleoside 5'-triphosphate = RNA(n+1) + diphosphate. Functionally, DNA-dependent RNA polymerase catalyzes the transcription of DNA into RNA using the four ribonucleoside triphosphates as substrates. The protein is DNA-directed RNA polymerase subunit beta of Chara vulgaris (Common stonewort).